Here is a 308-residue protein sequence, read N- to C-terminus: Putative proline iminopeptidase (308 aa).

An AB hydrolase-1 domain is found at 30–290 (KPVLYIHGGP…LYVTNNAGHS (261 aa)). Ser105 serves as the catalytic Nucleophile. The active site involves Asp261. The active-site Proton donor is His289.

Belongs to the peptidase S33 family.

It is found in the cytoplasm. It carries out the reaction Release of N-terminal proline from a peptide.. Specifically catalyzes the removal of N-terminal proline residues from peptides. This chain is Putative proline iminopeptidase (pip), found in Mycoplasma genitalium (strain ATCC 33530 / DSM 19775 / NCTC 10195 / G37) (Mycoplasmoides genitalium).